The sequence spans 105 residues: Sec-independent protein translocase protein TatA (105 aa).

The helical transmembrane segment at 1–21 (MSLGPWEIGIIVLLIIVLFGA) threads the bilayer. Residues 41–50 (EVKEMNKDGD) are compositionally biased toward basic and acidic residues. The segment at 41 to 105 (EVKEMNKDGD…QNYEDPNRTS (65 aa)) is disordered. Over residues 52 to 92 (PEQQQQPQQQIAPNQIEAPQPNFEQHYQGQQVQQPQNPQTP) the composition is skewed to low complexity. Residues 96 to 105 (QNYEDPNRTS) show a composition bias toward basic and acidic residues.

The protein belongs to the TatA/E family. In terms of assembly, the Tat system comprises two distinct complexes: a TatABC complex, containing multiple copies of TatA, TatB and TatC subunits, and a separate TatA complex, containing only TatA subunits. Substrates initially bind to the TatABC complex, which probably triggers association of the separate TatA complex to form the active translocon.

The protein localises to the cell membrane. In terms of biological role, part of the twin-arginine translocation (Tat) system that transports large folded proteins containing a characteristic twin-arginine motif in their signal peptide across membranes. TatA could form the protein-conducting channel of the Tat system. This Corynebacterium glutamicum (strain ATCC 13032 / DSM 20300 / JCM 1318 / BCRC 11384 / CCUG 27702 / LMG 3730 / NBRC 12168 / NCIMB 10025 / NRRL B-2784 / 534) protein is Sec-independent protein translocase protein TatA.